The sequence spans 362 residues: Putative sphingolipid delta(4)-desaturase/C4-monooxygenase (362 aa).

3 helical membrane passes run 45 to 61, 71 to 91, and 107 to 127; these read YVVSSLVIFQIFMCWLL, LEAYFCGGIINHAMTLAIHDI, and FFGMWANLPIAVPISVSFKKY. The short motif at 89–93 is the Histidine box-1 element; it reads HDISH. The short motif at 128 to 132 is the Histidine box-2 element; the sequence is HVEHH. 2 consecutive transmembrane segments (helical) span residues 160-177 and 198-218; these read LLWLALQPFFYGFRPLII and LLILHFFGVKSLFYLLFGTII. The Histidine box-3 signature appears at 259–263; it reads HVEHH.

Belongs to the fatty acid desaturase type 1 family. DEGS subfamily.

Its subcellular location is the membrane. The catalysed reaction is an N-acyl-15-methylhexadecasphinganine + 2 Fe(II)-[cytochrome b5] + O2 + 2 H(+) = an N-acyl-4-hydroxy-15-methylhexadecasphinganine + 2 Fe(III)-[cytochrome b5] + H2O. It catalyses the reaction an N-acyl-15-methylhexadecasphinganine + 2 Fe(II)-[cytochrome b5] + O2 + 2 H(+) = an N-acyl-15-methylhexadecasphing-4-enine + 2 Fe(III)-[cytochrome b5] + 2 H2O. The enzyme catalyses a dihydroceramide + 2 Fe(II)-[cytochrome b5] + O2 + 2 H(+) = a phytoceramide + 2 Fe(III)-[cytochrome b5] + H2O. It carries out the reaction an N-acylsphinganine + 2 Fe(II)-[cytochrome b5] + O2 + 2 H(+) = an N-acylsphing-4-enine + 2 Fe(III)-[cytochrome b5] + 2 H2O. The catalysed reaction is N-octanoylsphinganine + 2 Fe(II)-[cytochrome b5] + O2 + 2 H(+) = N-octanoyl-4-hydroxysphinganine + 2 Fe(III)-[cytochrome b5] + H2O. It catalyses the reaction an N-acylsphinganine + 2 Fe(II)-[cytochrome b5] + O2 + 2 H(+) = an N-acyl-(4R)-4-hydroxysphinganine + 2 Fe(III)-[cytochrome b5] + H2O. Its pathway is lipid metabolism; sphingolipid metabolism. In terms of biological role, bifunctional enzyme which acts both as a sphingolipid delta(4)-desaturase and a sphingolipid C4-monooxygenase. C.elegans contain specific sphingoid bases, which are unique or different in structure compared to the sphingoid bases found in other animals. Two examples of these distinctive compounds are: 15-methylhexadecasphinganine and 15-methylhexadecasphing-4-enine and this enzyme can catalyze their conversion. The protein is Putative sphingolipid delta(4)-desaturase/C4-monooxygenase (ttm-5) of Caenorhabditis elegans.